The chain runs to 470 residues: MQNHKNELQRSMKSRHLFMIALGGVIGTGLFLGSGFTISQAGPLGAIAAYIIGGFLMYLVMLCLGELAVAMPVAGSFQAYATKFLGQSTGFMIGWLYWFSWANTVGLELTSAGILMQRWLPSVPIWIWCLVFGIVIFLINALSVRSFAEMEFWFSSIKVAAIILFIVIGGAAVFGLIDFKGGQETPFLSNFMTDRGLFPNGVLAVMFTLVMVNFSFQGTELVGIAAGESESPEKTLPKSIRNVIWRTLFFFVLAMFVLVAILPYKTAGVIESPFVAVLDQIGIPFSADIMNFVILTAILSVANSGLYAASRMMWSLSSNQMGPSFLTRLTKKGVPMNALLITLGISGCSLLTSVMAAETVYLWCISISGMVTVVAWMSICASQFFFRRRFLAEGGNVNDLEFRTPLYPLVPILGFCLYGCVLISLIFIPDQRIGLYCGVPIIIFCYAYYHLSIKKRINHETIEKKQTEAQ.

12 helical membrane-spanning segments follow: residues 18 to 38 (FMIA…GFTI), 44 to 64 (LGAI…MLCL), 90 to 110 (GFMI…LELT), 119 to 139 (WLPS…IFLI), 159 to 179 (VAAI…LIDF), 196 to 216 (GLFP…NFSF), 243 to 263 (VIWR…AILP), 281 to 301 (IGIP…ILSV), 338 to 358 (ALLI…MAAE), 360 to 380 (VYLW…MSIC), 409 to 429 (LVPI…IFIP), and 433 to 453 (IGLY…HLSI).

This sequence belongs to the amino acid-polyamine-organocation (APC) superfamily.

Its subcellular location is the cell membrane. In terms of biological role, putative transport protein involved in arginine degradative pathway. Probably transports arginine or ornithine. This Bacillus subtilis (strain 168) protein is Amino-acid permease RocC (rocC).